The chain runs to 214 residues: GTP-binding nuclear protein GSP1/Ran (214 aa).

The region spanning 4–168 is the Small GTPase Ran-type domain; sequence EVPTFKLVLV…LWLARKLAGN (165 aa). 15 to 22 serves as a coordination point for GTP; sequence DGGTGKTT. The tract at residues 34–42 is switch-I; the sequence is KKYIATIGV. GTP-binding positions include Gly-65, 119-122, and 147-149; these read NKVD and SAK. Positions 65–81 are switch-II; the sequence is GQEKFGGLRDGYYINAQ.

The protein belongs to the small GTPase superfamily. Ran family. As to quaternary structure, found in a nuclear export complex with RanGTP, exportin and pre-miRNA.

The protein localises to the nucleus. GTP-binding protein involved in nucleocytoplasmic transport. Required for the import of protein into the nucleus and also for RNA export. Involved in chromatin condensation and control of cell cycle. This is GTP-binding nuclear protein GSP1/Ran (GSP1) from Eremothecium gossypii (strain ATCC 10895 / CBS 109.51 / FGSC 9923 / NRRL Y-1056) (Yeast).